The following is a 487-amino-acid chain: MSSLHIYNSLTRTKEPFKPIHPGLATIYVCGPTVYGHAHLGHAKSYVSFDVVVRWLRHVGEEQGYKVRYVQNITDVGHLTDDADEGEDKIQKQARQERIEPMEVAQYYTRSFYEDMDRLGVERPNIAPTATGHIPEQIALVERLIESGHAYESNGNVYFDVNSFEGYGKLSGRTDQEALQSGGRVAERSDKRNPSDFALWKKAEPGHIMKWQSPWGEGYPGWHLECSAMAMKYLGDTIDIHGGGMENKFPHHDCEIAQSEAATGKPFVRYWMHNNMVTVDGVKMGKSLKNFVNLKELFGKFDPLVIRFFILQSHYRSPLDFSEAAIRASQSGFEKLQETYKRLVESAEGKGQLDVATFEQKITDALNDDFNTPVAIAVLFEFIKALNGALDKDGLDAASKSGAQNLFDSYAGKVLGILKSRDELLAGESGESAQTLNDVMAVLLELRKEARASKDFATSDKIRDLLMERGIEIKDTREGATWSKKKA.

Cys30 is a Zn(2+) binding site. The 'HIGH' region motif lies at 32–42 (PTVYGHAHLGH). Zn(2+) is bound by residues Cys226, His251, and Glu255. The short motif at 283–287 (KMGKS) is the 'KMSKS' region element. Position 286 (Lys286) interacts with ATP.

Belongs to the class-I aminoacyl-tRNA synthetase family. As to quaternary structure, monomer. Zn(2+) serves as cofactor.

It localises to the cytoplasm. The enzyme catalyses tRNA(Cys) + L-cysteine + ATP = L-cysteinyl-tRNA(Cys) + AMP + diphosphate. The protein is Cysteine--tRNA ligase (cysS) of Chlorobaculum tepidum (strain ATCC 49652 / DSM 12025 / NBRC 103806 / TLS) (Chlorobium tepidum).